Reading from the N-terminus, the 541-residue chain is Molybdate transporter 1 (541 aa).

5 helical membrane passes run 24–44, 58–78, 98–118, 137–157, and 168–188; these read LLLSEISGSLGDLGTLLPLLL, LLFSGLFNILTGLVFGVPLPV, TVAAGAWVGFAVLLLGGTGGL, AGMSLVVAAGGGMVRPLGWLW, and GLGEWLDSRALAVLAFGGLVV. Residues 193–213 form a disordered region; that stretch reads QQQQQQQSGEKPQERRKKRSK. 2 helical membrane passes run 214-234 and 287-307; these read MPVQVPYALVLFLVGIMFAVV and MAIAQLPLTTLNSIIAASALA. Positions 317 to 366 are disordered; the sequence is PQLYADDESSDSPLSPSPSASSSSLSSAPPQTPSAETPKPLSSPTSAEEG. A compositionally biased stretch (low complexity) spans 327–351; sequence DSPLSPSPSASSSSLSSAPPQTPSA. 2 helical membrane-spanning segments follow: residues 413–433 and 435–455; these read IILLGLTKFLLGLFFPGPGLL and LLGKFPKAFLGVMVLGAGVEL. The interval 510-541 is disordered; sequence TEKGRGGEQGLLGEEEEEEEQGRVDEESPLLR.

It belongs to the SLC26A/SulP transporter (TC 2.A.53) family.

The protein resides in the vacuole membrane. Its function is as follows. Exports stored molybdate from the vacuole into the cytosol, making it available for molybdate cofactor (Moco) biosynthesis. Plays a role in molybdate homeostasis as high cytosolic levels of molybdate are toxic to cells. Not required for molybdate import into cells. The protein is Molybdate transporter 1 of Neurospora crassa (strain ATCC 24698 / 74-OR23-1A / CBS 708.71 / DSM 1257 / FGSC 987).